A 262-amino-acid chain; its full sequence is Hydroxyethylthiazole kinase (262 aa).

Substrate is bound at residue M50. The ATP site is built by R125 and T171. G198 serves as a coordination point for substrate.

This sequence belongs to the Thz kinase family. Mg(2+) is required as a cofactor.

It catalyses the reaction 5-(2-hydroxyethyl)-4-methylthiazole + ATP = 4-methyl-5-(2-phosphooxyethyl)-thiazole + ADP + H(+). It participates in cofactor biosynthesis; thiamine diphosphate biosynthesis; 4-methyl-5-(2-phosphoethyl)-thiazole from 5-(2-hydroxyethyl)-4-methylthiazole: step 1/1. Functionally, catalyzes the phosphorylation of the hydroxyl group of 4-methyl-5-beta-hydroxyethylthiazole (THZ). The sequence is that of Hydroxyethylthiazole kinase from Citrobacter koseri (strain ATCC BAA-895 / CDC 4225-83 / SGSC4696).